The sequence spans 144 residues: UPF0102 protein Veis_0630 (144 aa).

The interval 11–31 is disordered; that stretch reads PPAAAPGPAPAPASAATASER.

Belongs to the UPF0102 family.

The polypeptide is UPF0102 protein Veis_0630 (Verminephrobacter eiseniae (strain EF01-2)).